The chain runs to 214 residues: MSDDDERGEEYLFKIVIIGDSAVGKSNLLTRYARNEFNPNSKATIGVEFQTQSMLIDGKEVKAQIWDTAGQERFRAVTSAYYRGAVGALVVYDITRSSTFENVGRWLDELNTHSDTTVAKMLIGNKCDLESIRAVSVEEGKSLAESEGLFFMETSALDSTNVKTAFEMVIREIYSNISRKQLNSDSYKEELTVNRVSLVKNENEGTKTFSCCSR.

Position 19–26 (19–26) interacts with GTP; the sequence is GDSAVGKS. The short motif at 41–49 is the Effector region element; the sequence is SKATIGVEF. Residues 67–71, 125–128, and 155–156 contribute to the GTP site; these read DTAGQ, NKCD, and SA. 2 S-geranylgeranyl cysteine lipidation sites follow: Cys211 and Cys212.

This sequence belongs to the small GTPase superfamily. Rab family. In terms of assembly, interacts (via C-terminus) with GDI1. Interacts with PUX8/SAY1. Expressed in roots and actively dividing cells.

Its subcellular location is the golgi apparatus membrane. It is found in the golgi apparatus. The protein resides in the trans-Golgi network membrane. It localises to the cell membrane. Functionally, intracellular vesicle trafficking and protein transport. Binds GTP and GDP and possesses intrinsic GTPase activity. The protein is Ras-related protein RABA5c (RABA5C) of Arabidopsis thaliana (Mouse-ear cress).